The sequence spans 405 residues: L-rhamnonate dehydratase (405 aa).

Residues histidine 33 and arginine 59 each coordinate substrate. Mg(2+) is bound by residues aspartate 226, glutamate 252, and glutamate 280. Residue histidine 329 is the Proton acceptor of the active site. Glutamate 349 serves as a coordination point for substrate.

Belongs to the mandelate racemase/muconate lactonizing enzyme family. RhamD subfamily. In terms of assembly, homooctamer; tetramer of dimers. Requires Mg(2+) as cofactor.

The enzyme catalyses L-rhamnonate = 2-dehydro-3-deoxy-L-rhamnonate + H2O. Its function is as follows. Catalyzes the dehydration of L-rhamnonate to 2-keto-3-deoxy-L-rhamnonate (KDR). This Escherichia coli O6:H1 (strain CFT073 / ATCC 700928 / UPEC) protein is L-rhamnonate dehydratase.